A 648-amino-acid polypeptide reads, in one-letter code: Macrolide export ATP-binding/permease protein MacB (648 aa).

Residues leucine 5–threonine 243 enclose the ABC transporter domain. Glycine 41 to serine 48 provides a ligand contact to ATP. Transmembrane regions (helical) follow at residues leucine 273–glycine 293, alanine 417–alanine 437, leucine 523–isoleucine 543, valine 577–methionine 597, and leucine 611–leucine 631.

Belongs to the ABC transporter superfamily. Macrolide exporter (TC 3.A.1.122) family. As to quaternary structure, homodimer. Part of the tripartite efflux system MacAB-TolC, which is composed of an inner membrane transporter, MacB, a periplasmic membrane fusion protein, MacA, and an outer membrane component, TolC. The complex forms a large protein conduit and can translocate molecules across both the inner and outer membranes. Interacts with MacA.

It localises to the cell inner membrane. Its function is as follows. Part of the tripartite efflux system MacAB-TolC. MacB is a non-canonical ABC transporter that contains transmembrane domains (TMD), which form a pore in the inner membrane, and an ATP-binding domain (NBD), which is responsible for energy generation. Confers resistance against macrolides. The chain is Macrolide export ATP-binding/permease protein MacB from Salmonella typhi.